The sequence spans 635 residues: Chaperone protein DnaK (635 aa).

Thr-198 is subject to Phosphothreonine; by autocatalysis. The tract at residues 597-635 is disordered; that stretch reads LYEQDQANNERHDTPETEKAEGDNVVDAEFQEIDDQDKK. Over residues 604–618 the composition is skewed to basic and acidic residues; it reads NNERHDTPETEKAEG. Residues 620–635 show a composition bias toward acidic residues; the sequence is NVVDAEFQEIDDQDKK.

The protein belongs to the heat shock protein 70 family.

Functionally, acts as a chaperone. In Zymomonas mobilis subsp. mobilis (strain ATCC 31821 / ZM4 / CP4), this protein is Chaperone protein DnaK.